The primary structure comprises 625 residues: Sorting nexin-41 (625 aa).

Residues 1-90 (MDYNIFEAVH…STSSHAVVEA (90 aa)) form a disordered region. The span at 54 to 86 (SPPSSSSLPSSPAHSSSAGSSRASTSSSTSSHA) shows a compositional bias: low complexity. The 138-residue stretch at 98–235 (VSLSMSTTAT…QKFLNPEFNW (138 aa)) folds into the PX domain. A 1,2-diacyl-sn-glycero-3-phospho-(1D-myo-inositol-3-phosphate) is bound by residues arginine 153, serine 155, lysine 179, and arginine 202. Coiled-coil stretches lie at residues 437-469 (QFKI…NESL) and 539-563 (QLTE…KDCL).

This sequence belongs to the sorting nexin family. As to quaternary structure, binds to SNX4.

The protein resides in the prevacuolar compartment. It localises to the endosome. Its subcellular location is the endosome membrane. In terms of biological role, involved in proper sorting of the v-SNARE protein SNC1. This Saccharomyces cerevisiae (strain ATCC 204508 / S288c) (Baker's yeast) protein is Sorting nexin-41 (SNX41).